Here is a 250-residue protein sequence, read N- to C-terminus: Probable 2' cyclic ADP-D-ribose synthase TcpB (250 aa).

Positions 1–46 (MSKEKQAQSKAHKAQQAISSAKSLSTQKSKMSELERATRDGAAIGK) are disordered. Residues 1–117 (MSKEKQAQSK…TASATMEAEE (117 aa)) form a necessary and sufficient for phosphoinositide binding region. The segment covering 14–23 (AQQAISSAKS) has biased composition (low complexity). Residues 30 to 39 (KMSELERATR) show a composition bias toward basic and acidic residues. The TIR domain occupies 117 to 250 (EEYDFFISHA…EIAKELHSLI (134 aa)). Glu-192 is an active-site residue.

Homodimer; may also form oligomers. Interacts with host TIRAP. Interacts with host MYD88. Interaction with host MYD88 was not confirmed by another study. Interacts with host TLR4. Abolishes the interaction of host TIRAP with TLR4.

The protein resides in the secreted. The protein localises to the host cell membrane. The catalysed reaction is NAD(+) + H2O = ADP-D-ribose + nicotinamide + H(+). It carries out the reaction NAD(+) = 2'cADPR + nicotinamide + H(+). Its function is as follows. Virulence factor that interferes with host Toll-like receptor 2 (TLR2) and TLR4 signaling, resulting in the reduction of dendritic cell maturation, inhibition of pro-inflammatory cytokine secretion and impaired NF-kappa-B activation in macrophages. Interferes with host TLR4 signaling by abolishing host TLR4-TIRAP interaction (but not host TIRAP-MYD88 interaction) and its downstream signaling. Inhibits host TLR 2 induced NF-kappa-B activation and TNF (tumor necrosis factor) secretion. Binds phosphoinositide (PtdIns) via its N-terminal domain. Has NAD(+) hydrolase (NADase) activity, catalyzes cleavage of NAD(+) into ADP-D-ribose (ADPR) and nicotinamide. Also generates a cyclization variant of cyclic ADPR (cADPR), termed v-cADPR (probably 2'cADPR). The chain is Probable 2' cyclic ADP-D-ribose synthase TcpB from Brucella melitensis biotype 1 (strain ATCC 23456 / CCUG 17765 / NCTC 10094 / 16M).